The primary structure comprises 181 residues: Interleukin-10 (181 aa).

A signal peptide spans 1-19 (MHGSALLCCCLVLLAGVGA). 2 disulfides stabilise this stretch: cysteine 31-cysteine 129 and cysteine 81-cysteine 135. Asparagine 137 carries N-linked (GlcNAc...) asparagine glycosylation.

It belongs to the IL-10 family. As to quaternary structure, homodimer. Interacts with IL10RA and IL10RB.

It is found in the secreted. In terms of biological role, major immune regulatory cytokine that acts on many cells of the immune system where it has profound anti-inflammatory functions, limiting excessive tissue disruption caused by inflammation. Mechanistically, IL10 binds to its heterotetrameric receptor comprising IL10RA and IL10RB leading to JAK1 and STAT2-mediated phosphorylation of STAT3. In turn, STAT3 translocates to the nucleus where it drives expression of anti-inflammatory mediators. Targets antigen-presenting cells (APCs) such as macrophages and monocytes and inhibits their release of pro-inflammatory cytokines including granulocyte-macrophage colony-stimulating factor /GM-CSF, granulocyte colony-stimulating factor/G-CSF, IL-1 alpha, IL-1 beta, IL-6, IL-8 and TNF-alpha. Also interferes with antigen presentation by reducing the expression of MHC-class II and co-stimulatory molecules, thereby inhibiting their ability to induce T cell activation. In addition, controls the inflammatory response of macrophages by reprogramming essential metabolic pathways including mTOR signaling. The polypeptide is Interleukin-10 (IL10) (Canis lupus familiaris (Dog)).